Reading from the N-terminus, the 151-residue chain is Small ribosomal subunit protein uS15 (151 aa).

The span at 1 to 16 (MPHRSRHKKGRSRSVR) shows a compositional bias: basic residues. A disordered region spans residues 1 to 21 (MPHRSRHKKGRSRSVRPAHPT).

The protein belongs to the universal ribosomal protein uS15 family. In terms of assembly, part of the 30S ribosomal subunit.

This is Small ribosomal subunit protein uS15 from Pyrobaculum islandicum (strain DSM 4184 / JCM 9189 / GEO3).